A 574-amino-acid polypeptide reads, in one-letter code: MEFPIDDEELLDERNKLLQICNMDEQTMFYKWESWCLQRGNTPKLDLDTFKAFAKDMKFQMERQVKATLKQNPERKSIKQIPGMNIDSILGLPVKTTASGDSLMQESKPSTETFELNSSDAGRVLEVLNKELKIVTSKPSAPSKLVIVANFDLKAFNYRIMYQKLYDSSEVLDDRIELFSALTCRKYNISDEDLANPSELTQEPVVVVGRIVVESTNLGGRLNQNSILLESSRRLGAGVRVRLKVDDLPSYSIFPGQIVSVKGSNPSGNMFIAKEILPIPPLPFPSSSKQEHATFVANTNNQPISIYIASGPWSLRDDLSFSPLKSMISYVNKNPVDLVILCGPFLDINHILIRTGNITGTSATSLEELFKERVTPILSQLTCPCILIPHINDAASDHPAWPQDAFNRVALGLPSNFKCFPNPCMFSINDVVFGVSTNDILLHTSREELFRLPSHGNLFARLVSHVLHQRHFYPLFPGGSLEKCNPSNLDIAHLKLGEFLNTMPDILILPSDLRYFVKNVENVVSLNPGKATKGINLGTFAKLTIAPLELGDNGSSNHYSHRVWLRTKAEILKL.

The protein belongs to the DNA polymerase alpha subunit B family. As to quaternary structure, component of the alpha DNA polymerase complex (also known as the alpha DNA polymerase-primase complex) consisting of four subunits: the catalytic subunit pol1, the accessory subunit spb70/pol12, and the primase complex subunits spp1/pri1 and spp2/pri2 respectively. Interacts with orc1. Interacts with orc2; the interaction occurs on the chromatin, is stable thoughout the cell cycle and is independent from spb70 role in the alpha DNA polymerase complex. In terms of processing, phosphorylated in a cell cycle-dependent manner.

It is found in the nucleus. The protein resides in the chromosome. Its function is as follows. Accessory subunit of the DNA polymerase alpha complex (also known as the alpha DNA polymerase-primase complex) which plays an essential role in the initiation of DNA synthesis. During the S phase of the cell cycle, the DNA polymerase alpha complex (composed of a catalytic subunit pol1, an accessory subunit spb70/pol12 and two primase subunits, the catalytic subunit spp1/pri1 and the regulatory subunit spp2/pri2) is recruited to DNA at the replicative forks. The primase subunit of the polymerase alpha complex initiates DNA synthesis by oligomerising short RNA primers on both leading and lagging strands. The chain is DNA polymerase alpha subunit B from Schizosaccharomyces pombe (strain 972 / ATCC 24843) (Fission yeast).